Reading from the N-terminus, the 197-residue chain is Lipid A acyltransferase PagP (197 aa).

The N-terminal stretch at 1–24 (MMFFKRTILACTVALLFPALPSYA) is a signal peptide. Residues histidine 69, aspartate 112, and serine 113 contribute to the active site.

This sequence belongs to the lipid A palmitoyltransferase family. In terms of assembly, homodimer.

The protein resides in the cell outer membrane. It carries out the reaction a lipid A + a 1,2-diacyl-sn-glycero-3-phosphocholine = a hepta-acyl lipid A + a 2-acyl-sn-glycero-3-phosphocholine. The catalysed reaction is a lipid IVA + a 1,2-diacyl-sn-glycero-3-phosphocholine = a lipid IVB + a 2-acyl-sn-glycero-3-phosphocholine. The enzyme catalyses a lipid IIA + a 1,2-diacyl-sn-glycero-3-phosphocholine = a lipid IIB + a 2-acyl-sn-glycero-3-phosphocholine. Its function is as follows. Transfers a fatty acid residue from the sn-1 position of a phospholipid to the N-linked hydroxyfatty acid chain on the proximal unit of lipid A or its precursors. In Serratia proteamaculans (strain 568), this protein is Lipid A acyltransferase PagP.